An 844-amino-acid polypeptide reads, in one-letter code: Protein translocase subunit SecA 1 (844 aa).

Residues Gln91, 109-113, and Asp498 contribute to the ATP site; that span reads GEGKT. Basic and acidic residues predominate over residues 793–813; the sequence is KSKSFGEAKHVTAEDGKEKAK. The segment at 793 to 825 is disordered; it reads KSKSFGEAKHVTAEDGKEKAKPQPIVKGDQVGR. 4 residues coordinate Zn(2+): Cys829, Cys831, Cys840, and His841.

The protein belongs to the SecA family. Monomer and homodimer. Part of the essential Sec protein translocation apparatus which comprises SecA, SecYEG and auxiliary proteins SecDF. Other proteins may also be involved. Zn(2+) serves as cofactor.

The protein resides in the cell membrane. Its subcellular location is the cytoplasm. The enzyme catalyses ATP + H2O + cellular proteinSide 1 = ADP + phosphate + cellular proteinSide 2.. Its function is as follows. Part of the Sec protein translocase complex. Interacts with the SecYEG preprotein conducting channel. Has a central role in coupling the hydrolysis of ATP to the transfer of proteins into and across the cell membrane, serving as an ATP-driven molecular motor driving the stepwise translocation of polypeptide chains across the membrane. The sequence is that of Protein translocase subunit SecA 1 from Staphylococcus epidermidis (strain ATCC 35984 / DSM 28319 / BCRC 17069 / CCUG 31568 / BM 3577 / RP62A).